Consider the following 78-residue polypeptide: Defensin-like protein 173 (78 aa).

The N-terminal stretch at methionine 1–proline 23 is a signal peptide. 4 cysteine pairs are disulfide-bonded: cysteine 27–cysteine 71, cysteine 34–cysteine 56, cysteine 40–cysteine 65, and cysteine 44–cysteine 67.

It belongs to the DEFL family.

The protein resides in the secreted. In Arabidopsis thaliana (Mouse-ear cress), this protein is Defensin-like protein 173 (LCR63).